A 49-amino-acid chain; its full sequence is Large ribosomal subunit protein bL33B (49 aa).

This sequence belongs to the bacterial ribosomal protein bL33 family.

This Listeria innocua serovar 6a (strain ATCC BAA-680 / CLIP 11262) protein is Large ribosomal subunit protein bL33B (rpmG2).